Reading from the N-terminus, the 198-residue chain is Guanylate kinase (198 aa).

One can recognise a Guanylate kinase-like domain in the interval Lys6 to His192. ATP is bound at residue Gly13–Gly20.

This sequence belongs to the guanylate kinase family.

The protein localises to the cytoplasm. The enzyme catalyses GMP + ATP = GDP + ADP. Functionally, essential for recycling GMP and indirectly, cGMP. The protein is Guanylate kinase of Mycoplasmopsis synoviae (strain 53) (Mycoplasma synoviae).